The sequence spans 558 residues: Inositol-3-phosphate synthase 1 (558 aa).

Positions 67, 68, 69, 70, 141, 177, 178, 188, 191, 228, 229, 230, 231, 278, 279, 303, 306, 337, 338, 339, and 352 each coordinate NAD(+). Ser279 bears the Phosphoserine mark. Ser357 is subject to Phosphoserine. The NAD(+) site is built by Gly390, Asp391, Asp419, and Ser420. Positions 537–558 (ATNGCTGDANGHLQEEPPMPTT) are disordered.

It belongs to the myo-inositol 1-phosphate synthase family. The cofactor is NAD(+). Phosphorylation at Ser-279 and Ser-357 may be associated with a decrease in activity. Highly expressed in testis, ovary, heart, placenta and pancreas. Weakly expressed in blood leukocyte, thymus, skeletal muscle and colon.

The protein resides in the cytoplasm. The catalysed reaction is D-glucose 6-phosphate = 1D-myo-inositol 3-phosphate. The protein operates within polyol metabolism; myo-inositol biosynthesis; myo-inositol from D-glucose 6-phosphate: step 1/2. Inhibited by mood-stabilizing drugs such as valproate (VPA) and lithium. Its function is as follows. Key enzyme in myo-inositol biosynthesis pathway that catalyzes the conversion of glucose 6-phosphate to 1-myo-inositol 1-phosphate in a NAD-dependent manner. Rate-limiting enzyme in the synthesis of all inositol-containing compounds. This is Inositol-3-phosphate synthase 1 (ISYNA1) from Homo sapiens (Human).